The primary structure comprises 225 residues: 2-C-methyl-D-erythritol 4-phosphate cytidylyltransferase (225 aa).

Belongs to the IspD/TarI cytidylyltransferase family. IspD subfamily.

It catalyses the reaction 2-C-methyl-D-erythritol 4-phosphate + CTP + H(+) = 4-CDP-2-C-methyl-D-erythritol + diphosphate. It functions in the pathway isoprenoid biosynthesis; isopentenyl diphosphate biosynthesis via DXP pathway; isopentenyl diphosphate from 1-deoxy-D-xylulose 5-phosphate: step 2/6. Catalyzes the formation of 4-diphosphocytidyl-2-C-methyl-D-erythritol from CTP and 2-C-methyl-D-erythritol 4-phosphate (MEP). The polypeptide is 2-C-methyl-D-erythritol 4-phosphate cytidylyltransferase (Prochlorococcus marinus (strain MIT 9313)).